Here is a 314-residue protein sequence, read N- to C-terminus: tRNA dimethylallyltransferase (314 aa).

Residues methionine 1–leucine 24 are disordered. Residue glycine 40–serine 47 coordinates ATP. Threonine 42–serine 47 contributes to the substrate binding site.

The protein belongs to the IPP transferase family. Monomer. The cofactor is Mg(2+).

It carries out the reaction adenosine(37) in tRNA + dimethylallyl diphosphate = N(6)-dimethylallyladenosine(37) in tRNA + diphosphate. Catalyzes the transfer of a dimethylallyl group onto the adenine at position 37 in tRNAs that read codons beginning with uridine, leading to the formation of N6-(dimethylallyl)adenosine (i(6)A). This Cereibacter sphaeroides (strain ATCC 17029 / ATH 2.4.9) (Rhodobacter sphaeroides) protein is tRNA dimethylallyltransferase.